Consider the following 739-residue polypeptide: Sulfate transporter (739 aa).

The interval Met-1–Ile-27 is disordered. Ser-12 and Ser-16 each carry phosphoserine. Helical transmembrane passes span Val-112–Leu-132 and Pro-137–Ser-157. Asn-199 and Asn-205 each carry an N-linked (GlcNAc...) asparagine glycan. 2 helical membrane-spanning segments follow: residues Ile-219–Phe-239 and Gly-242–Phe-262. A glycan (N-linked (GlcNAc...) asparagine) is linked at Asn-357. The next 4 membrane-spanning stretches (helical) occupy residues Leu-378–Val-398, Ala-420–Leu-440, Leu-455–Phe-475, and Leu-524–Leu-544. In terms of domain architecture, STAS spans Ala-568–Ala-719.

This sequence belongs to the SLC26A/SulP transporter (TC 2.A.53) family. In terms of processing, N-glycosylated. Ubiquitously expressed.

The protein resides in the cell membrane. Its subcellular location is the apical cell membrane. It catalyses the reaction oxalate(in) + sulfate(out) = oxalate(out) + sulfate(in). The catalysed reaction is sulfate(out) + 2 chloride(in) = sulfate(in) + 2 chloride(out). The enzyme catalyses oxalate(out) + 2 chloride(in) = oxalate(in) + 2 chloride(out). It carries out the reaction bromide(in) + chloride(out) = bromide(out) + chloride(in). It catalyses the reaction nitrate(in) + chloride(out) = nitrate(out) + chloride(in). The catalysed reaction is iodide(in) + chloride(out) = iodide(out) + chloride(in). An extracellular acidic pH inhibits chloride-sulfate and chloride-oxalate exchange activity whereas an intracellular acidic pH activates chloride-sulfate exchange with no effect on chloride-oxalate exchange activity. Its function is as follows. Sulfate transporter which mediates sulfate uptake into chondrocytes in order to maintain adequate sulfation of proteoglycans which is needed for cartilage development. Mediates electroneutral anion exchange of sulfate ions for oxalate ions and of sulfate and oxalate ions for chloride ions. Mediates exchange of sulfate and oxalate ions for hydroxyl ions and of chloride ions for bromide, iodide and nitrate ions. The coupling of sulfate transport to both hydroxyl and chloride ions likely serves to ensure transport at both acidic pH when most sulfate uptake is mediated by sulfate-hydroxide exchange and alkaline pH when most sulfate uptake is mediated by sulfate-chloride exchange. Essential for chondrocyte proliferation, differentiation and cell size expansion. This Homo sapiens (Human) protein is Sulfate transporter (SLC26A2).